A 510-amino-acid chain; its full sequence is Acyl-CoA desaturase 1 (510 aa).

Topologically, residues Met-1–Asn-112 are cytoplasmic. A helical transmembrane segment spans residues Trp-113–Gly-133. The Lumenal portion of the chain corresponds to Lys-134–His-138. Residues Leu-139–Gly-159 form a helical membrane-spanning segment. Residues Tyr-160–His-255 lie on the Cytoplasmic side of the membrane. Fe cation contacts are provided by His-161, His-166, His-198, His-201, and His-202. The Histidine box-1 signature appears at His-161–His-166. Positions His-198 to His-202 match the Histidine box-2 motif. A helical membrane pass occupies residues Tyr-256 to Phe-276. Topologically, residues Asn-277 to Met-280 are lumenal. The chain crosses the membrane as a helical span at residues Gly-281–Ile-301. Topologically, residues Asn-302–Phe-510 are cytoplasmic. 4 residues coordinate Fe cation: His-306, His-335, His-338, and His-339. The Histidine box-3 signature appears at His-335–His-339. One can recognise a Cytochrome b5 heme-binding domain in the interval Leu-409–Lys-487. Residues His-444 and His-470 each contribute to the heme site.

This sequence belongs to the fatty acid desaturase type 1 family. It depends on Fe(2+) as a cofactor.

It is found in the endoplasmic reticulum membrane. It catalyses the reaction octadecanoyl-CoA + 2 Fe(II)-[cytochrome b5] + O2 + 2 H(+) = (9Z)-octadecenoyl-CoA + 2 Fe(III)-[cytochrome b5] + 2 H2O. The enzyme catalyses hexadecanoyl-CoA + 2 Fe(II)-[cytochrome b5] + O2 + 2 H(+) = (9Z)-hexadecenoyl-CoA + 2 Fe(III)-[cytochrome b5] + 2 H2O. In terms of biological role, stearoyl-CoA desaturase that utilizes O(2) and electrons from reduced cytochrome b5 to introduce the first double bond into saturated fatty acyl-CoA substrates. Catalyzes the insertion of a cis double bond at the delta-9 position into fatty acyl-CoA substrates including palmitoyl-CoA and stearoyl-CoA. Required for the biosynthesis of membrane phospholipids, cholesterol esters and triglycerides. Regulates fatty acid desaturation, that is, the ratio of unsaturated versus saturated fatty acyl chains, by competing with the acyltransferase STC1 for the common substrate C16:0-CoA. SCT1 sequesters C16:0-CoA into lipids, thereby shielding it from desaturation by OLE1. The sequence is that of Acyl-CoA desaturase 1 (OLE1) from Saccharomyces cerevisiae (strain ATCC 204508 / S288c) (Baker's yeast).